The primary structure comprises 315 residues: Ester hydrolase C11orf54 (315 aa).

Residues His-266, His-268, and His-278 each contribute to the Zn(2+) site.

In terms of assembly, monomer. Zn(2+) serves as cofactor.

It localises to the nucleus. The protein localises to the cytoplasm. Exhibits ester hydrolase activity on the substrate p-nitrophenyl acetate, in vitro. Regulates DNA damage and repair by regulating HIF1A degradation via chaperone-mediated autophagy (CMA). Functionally, probably non-functional. In Homo sapiens (Human), this protein is Ester hydrolase C11orf54 (C11orf54).